The following is a 398-amino-acid chain: Phosphoglycerate kinase (398 aa).

Residues 23 to 25, Arg38, 61 to 64, Arg122, and Arg155 each bind substrate; these read DFN and HMGK. ATP contacts are provided by residues Lys206, Gly297, Glu328, and 354 to 357; that span reads GGDS.

This sequence belongs to the phosphoglycerate kinase family. Monomer.

Its subcellular location is the cytoplasm. The catalysed reaction is (2R)-3-phosphoglycerate + ATP = (2R)-3-phospho-glyceroyl phosphate + ADP. The protein operates within carbohydrate degradation; glycolysis; pyruvate from D-glyceraldehyde 3-phosphate: step 2/5. In Clostridium botulinum (strain Loch Maree / Type A3), this protein is Phosphoglycerate kinase.